The primary structure comprises 485 residues: Aspartyl/glutamyl-tRNA(Asn/Gln) amidotransferase subunit B (485 aa).

It belongs to the GatB/GatE family. GatB subfamily. As to quaternary structure, heterotrimer of A, B and C subunits.

The enzyme catalyses L-glutamyl-tRNA(Gln) + L-glutamine + ATP + H2O = L-glutaminyl-tRNA(Gln) + L-glutamate + ADP + phosphate + H(+). The catalysed reaction is L-aspartyl-tRNA(Asn) + L-glutamine + ATP + H2O = L-asparaginyl-tRNA(Asn) + L-glutamate + ADP + phosphate + 2 H(+). Its function is as follows. Allows the formation of correctly charged Asn-tRNA(Asn) or Gln-tRNA(Gln) through the transamidation of misacylated Asp-tRNA(Asn) or Glu-tRNA(Gln) in organisms which lack either or both of asparaginyl-tRNA or glutaminyl-tRNA synthetases. The reaction takes place in the presence of glutamine and ATP through an activated phospho-Asp-tRNA(Asn) or phospho-Glu-tRNA(Gln). The polypeptide is Aspartyl/glutamyl-tRNA(Asn/Gln) amidotransferase subunit B (Gluconobacter oxydans (strain 621H) (Gluconobacter suboxydans)).